Consider the following 169-residue polypeptide: X polypeptide (169 aa).

This sequence belongs to the IagB/IpgF/P19 family.

This is X polypeptide (X) from Escherichia coli.